A 529-amino-acid polypeptide reads, in one-letter code: Protein FLOURY ENDOSPERM 6, chloroplastic (529 aa).

Disordered stretches follow at residues 1–22 (MLPLLLPLPVTPPPPLPSPTLT), 39–77 (AAPHHHHHHRRRRVYRRQRAAPTQTRAPRRTLSASNAAR), and 166–275 (QGAV…HNKS). The transit peptide at 1–71 (MLPLLLPLPV…QTRAPRRTLS (71 aa)) directs the protein to the chloroplast. Over residues 9-18 (PVTPPPPLPS) the composition is skewed to pro residues. Over residues 41–57 (PHHHHHHRRRRVYRRQR) the composition is skewed to basic residues. The stretch at 400–452 (VMQAQEELRSIRAKIAVLEGKMALEIIEKNKIIEEKQRRLDEAEKALSELRTV) forms a coiled coil.

As to quaternary structure, interacts with SKIPA. Interacts with ISA1. In terms of tissue distribution, expressed in leaves, stems and panicles. Expressed at lower levels in roots and developing seeds.

The protein resides in the plastid. Its subcellular location is the chloroplast. Functionally, involved in compound starch granule formation and starch synthesis in endosperm. May act as a regulatory scaffolding protein and affect starch synthesis and compound starch granule formation through direct interaction with isoamylase 1 (ISA1). Binds starch, amylopectin and amylose through its C-terminal carbohydrate-binding domain (CBM) in vitro. This Oryza sativa subsp. japonica (Rice) protein is Protein FLOURY ENDOSPERM 6, chloroplastic.